The sequence spans 37 residues: Large ribosomal subunit protein bL36 (37 aa).

This sequence belongs to the bacterial ribosomal protein bL36 family.

The protein is Large ribosomal subunit protein bL36 of Shewanella baltica (strain OS223).